A 126-amino-acid polypeptide reads, in one-letter code: Histone H2B 8 (126 aa).

Residues 1–12 (MPEPAKSAPAPK) are compositionally biased toward low complexity. Residues 1–35 (MPEPAKSAPAPKKGSKKAVTKTQKKGDKKRRKTRK) are disordered. N6-acetyllysine is present on residues lysine 6 and lysine 13. Basic residues predominate over residues 13–34 (KGSKKAVTKTQKKGDKKRRKTR). Serine 15 carries the phosphoserine modification. Lysine 16 and lysine 21 each carry N6-acetyllysine. Serine 113 carries an O-linked (GlcNAc) serine glycan. Lysine 121 is covalently cross-linked (Glycyl lysine isopeptide (Lys-Gly) (interchain with G-Cter in ubiquitin)).

The protein belongs to the histone H2B family. As to quaternary structure, the nucleosome is a histone octamer containing two molecules each of H2A, H2B, H3 and H4 assembled in one H3-H4 heterotetramer and two H2A-H2B heterodimers. The octamer wraps approximately 147 bp of DNA. In terms of processing, monoubiquitination of Lys-121 by the BRE1 gives a specific tag for epigenetic transcriptional activation and is also prerequisite for histone H3 'Lys-4' and 'Lys-79' methylation. Phosphorylated on Ser-15 during apoptosis; which facilitates apoptotic chromatin condensation. Post-translationally, glcNAcylation at Ser-113 promotes monoubiquitination of Lys-121. It fluctuates in response to extracellular glucose, and associates with transcribed genes.

Its subcellular location is the nucleus. It is found in the chromosome. Functionally, core component of nucleosome. Nucleosomes wrap and compact DNA into chromatin, limiting DNA accessibility to the cellular machineries which require DNA as a template. Histones thereby play a central role in transcription regulation, DNA repair, DNA replication and chromosomal stability. DNA accessibility is regulated via a complex set of post-translational modifications of histones, also called histone code, and nucleosome remodeling. The chain is Histone H2B 8 (H2B-VIII) from Gallus gallus (Chicken).